The primary structure comprises 138 residues: Aspartate 1-decarboxylase (138 aa).

Ser-25 functions as the Schiff-base intermediate with substrate; via pyruvic acid in the catalytic mechanism. Residue Ser-25 is modified to Pyruvic acid (Ser). Thr-57 serves as a coordination point for substrate. The Proton donor role is filled by Tyr-58. 73–75 (GAA) provides a ligand contact to substrate.

This sequence belongs to the PanD family. In terms of assembly, heterooctamer of four alpha and four beta subunits. It depends on pyruvate as a cofactor. Is synthesized initially as an inactive proenzyme, which is activated by self-cleavage at a specific serine bond to produce a beta-subunit with a hydroxyl group at its C-terminus and an alpha-subunit with a pyruvoyl group at its N-terminus.

It is found in the cytoplasm. The enzyme catalyses L-aspartate + H(+) = beta-alanine + CO2. Its pathway is cofactor biosynthesis; (R)-pantothenate biosynthesis; beta-alanine from L-aspartate: step 1/1. In terms of biological role, catalyzes the pyruvoyl-dependent decarboxylation of aspartate to produce beta-alanine. The sequence is that of Aspartate 1-decarboxylase from Renibacterium salmoninarum (strain ATCC 33209 / DSM 20767 / JCM 11484 / NBRC 15589 / NCIMB 2235).